Consider the following 228-residue polypeptide: Aldehyde dehydrogenase 9 (228 aa).

Residue 76–81 coordinates NAD(+); sequence GSTETA. Active-site residues include Glu99 and Cys132.

Belongs to the aldehyde dehydrogenase family.

It carries out the reaction an aldehyde + NAD(+) + H2O = a carboxylate + NADH + 2 H(+). It participates in alcohol metabolism; ethanol degradation; acetate from ethanol: step 2/2. The chain is Aldehyde dehydrogenase 9 (ALDH9) from Polyandrocarpa misakiensis (Tunicate).